A 167-amino-acid polypeptide reads, in one-letter code: Small ribosomal subunit protein uS5 (167 aa).

Positions 12–75 (LQEKLIAVNR…EKARRNMVTV (64 aa)) constitute an S5 DRBM domain.

The protein belongs to the universal ribosomal protein uS5 family. In terms of assembly, part of the 30S ribosomal subunit. Contacts proteins S4 and S8.

In terms of biological role, with S4 and S12 plays an important role in translational accuracy. Located at the back of the 30S subunit body where it stabilizes the conformation of the head with respect to the body. The sequence is that of Small ribosomal subunit protein uS5 from Shewanella sp. (strain W3-18-1).